The chain runs to 299 residues: Oxygen-dependent coproporphyrinogen-III oxidase (299 aa).

S92 provides a ligand contact to substrate. A divalent metal cation contacts are provided by H96 and H106. H106 functions as the Proton donor in the catalytic mechanism. N108–R110 lines the substrate pocket. The a divalent metal cation site is built by H145 and H175. The tract at residues Y239–E274 is important for dimerization. G257–R259 lines the substrate pocket.

This sequence belongs to the aerobic coproporphyrinogen-III oxidase family. As to quaternary structure, homodimer. Requires a divalent metal cation as cofactor.

The protein resides in the cytoplasm. It carries out the reaction coproporphyrinogen III + O2 + 2 H(+) = protoporphyrinogen IX + 2 CO2 + 2 H2O. It participates in porphyrin-containing compound metabolism; protoporphyrin-IX biosynthesis; protoporphyrinogen-IX from coproporphyrinogen-III (O2 route): step 1/1. In terms of biological role, involved in the heme biosynthesis. Catalyzes the aerobic oxidative decarboxylation of propionate groups of rings A and B of coproporphyrinogen-III to yield the vinyl groups in protoporphyrinogen-IX. This chain is Oxygen-dependent coproporphyrinogen-III oxidase, found in Xanthomonas campestris pv. campestris (strain 8004).